Here is a 161-residue protein sequence, read N- to C-terminus: GTP-dependent dephospho-CoA kinase (161 aa).

GTP contacts are provided by aspartate 40, valine 41, valine 42, aspartate 59, and glutamate 112.

Belongs to the GTP-dependent DPCK family.

It catalyses the reaction 3'-dephospho-CoA + GTP = GDP + CoA + H(+). The protein operates within cofactor biosynthesis; coenzyme A biosynthesis. Its function is as follows. Catalyzes the GTP-dependent phosphorylation of the 3'-hydroxyl group of dephosphocoenzyme A to form coenzyme A (CoA). The chain is GTP-dependent dephospho-CoA kinase from Methanoculleus marisnigri (strain ATCC 35101 / DSM 1498 / JR1).